A 1121-amino-acid polypeptide reads, in one-letter code: Piwi-like protein ergo-1 (1121 aa).

Positions 1–14 are enriched in gly residues; that stretch reads MSYNNGGGGGGGGY. A disordered region spans residues 1-134; it reads MSYNNGGGGG…GNRGGGGGRV (134 aa). 2 stretches are compositionally biased toward basic and acidic residues: residues 15-29 and 40-77; these read RNDR…DRQN and YNDD…DRRG. Polar residues predominate over residues 99–112; sequence GSNQRNDNYGNNRG. The segment covering 125 to 134 has biased composition (gly residues); the sequence is GNRGGGGGRV. The PAZ domain maps to 426 to 534; it reads VMTQILTKMT…MPLELVSYIV (109 aa). Positions 774-1081 constitute a Piwi domain; that stretch reads NVLKYLADNK…AAKRAKETLD (308 aa).

The protein belongs to the argonaute family. Piwi subfamily. In terms of assembly, interacts with rde-12. Interacts with rde-10. As to expression, highly expressed in the germline in hermaphrodites.

The protein localises to the cytoplasm. Functionally, argonaute protein required for gene silencing in the endogenous RNA interference (RNAi) pathway. Involved in the 26G RNAi pathway and associates with both unmethylated and methylated 26G small interfering RNAs (26G-siRNAs), which are a class of 26 nucleotide siRNAs that possess a guanine residue at the 5'-end. Associated 26G-siRNAs are methylated by the methyltransferase henn-1, which stabilizes the siRNAs. Association with 26G-siRNAs is required for the biogenesis of secondary 22G-siRNAs (a class of 22 nucleotide siRNAs that possess a triphosphorylated guanine residue at the 5'-end). May be involved in passenger strand cleavage of target 26G-siRNAs. The protein is Piwi-like protein ergo-1 of Caenorhabditis elegans.